The sequence spans 624 residues: Hemocyanin E chain (624 aa).

Cu cation-binding residues include His-169, His-173, His-200, His-320, His-324, and His-360. Asn-445 is a glycosylation site (N-linked (GlcNAc...) asparagine). An intrachain disulfide couples Cys-529 to Cys-577.

It belongs to the tyrosinase family. Hemocyanin subfamily. In terms of assembly, tarantula hemocyanin is a 24-chain polymer with seven different chains identified. Hemolymph.

Its subcellular location is the secreted. The protein resides in the extracellular space. Hemocyanins are copper-containing oxygen carriers occurring freely dissolved in the hemolymph of many mollusks and arthropods. This is Hemocyanin E chain (HCE) from Aphonopelma sp. (American tarantula).